Consider the following 601-residue polypeptide: MALPSAAMQSNPEKLNLFHRLSSLPTTSLEYGNNRFPFFSSSAKSHFKKPTQACLSSTTHQEVRPLAYFPPTVWGNRFASLTFNPSEFESYDERVIVLKKKVKDILISSTSDSVETVILIDLLCRLGVSYHFENDIEELLSKIFNSQPDLVDEKECDLYTAAIVFRVFRQHGFKMSSDVFSKFKDSDGKFKESLRGDAKGMLSLFEASHLSVHGEDILEEAFAFTKDYLQSSAVELFPNLKRHITNALEQPFHSGVPRLEARKFIDLYEADIECRNETLLEFAKLDYNRVQLLHQQELCQFSKWWKDLNLASDIPYARDRMAEIFFWAVAMYFEPDYAHTRMIIAKVVLLISLIDDTIDAYATMEETHILAEAVARWDMSCLEKLPDYMKVIYKLLLNTFSEFEKELTAEGKSYSVKYGREAFQELVRGYYLEAVWRDEGKIPSFDDYLYNGSMTTGLPLVSTASFMGVQEITGLNEFQWLETNPKLSYASGAFIRLVNDLTSHVTEQQRGHVASCIDCYMNQHGVSKDEAVKILQKMATDCWKEINEECMRQSQVSVGHLMRIVNLARLTDVSYKYGDGYTDSQQLKQFVKGLFVDPISI.

A chloroplast-targeting transit peptide spans 1–56 (MALPSAAMQSNPEKLNLFHRLSSLPTTSLEYGNNRFPFFSSSAKSHFKKPTQACLS). The Mg(2+) site is built by Asp355, Asp359, Asn499, Ser503, and Glu507. The DDXXD motif motif lies at 355-359 (DDTID).

It belongs to the terpene synthase family. The cofactor is Mg(2+).

The protein resides in the plastid. It localises to the chloroplast. The catalysed reaction is (2E,6E,10E)-geranylgeranyl diphosphate = casbene + diphosphate. Catalyzes the cyclization of geranylgeranyl diphosphate to casbene, a diterpene phytoalexin with antibacterial and antifungal activity. The chain is Casbene synthase, chloroplastic from Ricinus communis (Castor bean).